The primary structure comprises 2238 residues: MDDIVNQLFDLLRKHFPARPKVTEQITLVTCQNDAKMILTEGFKLLSLLVELDSAEANNCTHNSDSLTIEGILRKEGIMSIALPRIVPDGFSLYGNVLILLETFVRVNPVSFEQKYNQDMSKLLSLKDDLSLCGITLVPLVDGRTNYYNRFVDDWVIERFRWLLLQLIKFVRESGEEIEELEYQRLITSLSKLENQSLGFENIEKLPQTGLKYRDELKKHMFGNLSSKMKESEIQENLINVLKEFFIKEYKNNKSLHKFVFTNRDGLLAKLDQITHHSEHPVDCMSCSSKLYSIIDKLGTLKRQPLHSDYHPIYAKMWHSDSLSQAEQIYLKLLSQCNKIKSAKLLNTRRNTLLFLDLIMVNFIVHSWKQNPEVLTEYRRCGLMAGQLALFSNDRYFDLNELRNKLINKLKNCENWIAKCVHQLKKQEFVALDDVLVWATVPDFESLELITTSLELKRFKLQYGKDKVDHNEHPIGPLSEETFFRNLNVLSSVCLALVNSMKTSFTSKTVINERRASNHFGEVDLIECYCQRFFLSKDLVGILSYQKTGEKSRCYSISLISNGELEYIGSFYCDPKRFFLPIFSQIVLLNMSREMMLWLADLNLNDSLVGDKLRKLILLIVTNPSKRNQTFLQGLRYFIMAYVNQFHHVELMDRLIVPVKSYCESCLQRISFDIFRLILEGDYDNEHMTRKFKFLLNVSYLCHLITKETPDRLTDQIKCFEKFMEPKLKFESVIVNPSLTENMTEDEEAQVLKGVDKLLGKSLSCSTDLTSPGVSKTLLSMCVSSFNRGLLNVNGHLRQDPYRPNFTSTALDLSSNKSVVVPKLDELGNPISRYDYELLVSSCVTNLAEGFKTKGKFKLDINCQEYTIMRNLTNLVLKNEDKSDAKIKGEKPCSFELSQWMETLSEEQLEVLEKLKGDVNIALGKLKEKGRSKSNSTLKEGVKRLDSGNTLAGCADPQQVLVNLWSEFGVMKQILVEVSLHEIKDFDPDIIPPQMIQKLVFKVNNSNYKSLFFLDSVINPCPLELLIKNMTTATFDDGELFECFKYLLITAGFDQKLGTYEHKNRSRFGFKFEALKVREEGRMSSRESNSEAIARRLDKSVFTNSALRNLCFYSDESPISYSHVSPDVGKLKFGLSYKEQVGSNRELYVGDLNTKLMTRLIEDFSESVVSNMSYSCLNNEAEFEKAITDMKMCVNLGDMSLSLDHSKWGPHMSPVIFAAFLQGLDLKYGPSLCKLNTDPIITLLSWHIHKVVEVPYNVIHAYVTGMIKRQLGLMNMSGSTITESFVHRLLKEKREPLSHVMSVIDMGQGILHNMSDLYGLVTEQFINYAIHFLFDMNTTSYTSSDDQISMIKIGSGMCNFESLKVIEEWETILNFHAFISTKFNKFVSPKTVAGTFAAEFKSRFFVWGEEVPLLTKFVSAALHNVKCKTPVQLSETVDTICDQCVANGVSVEIVSYICNRTNRLIRYSGFGEHPFLNVENLDVKDWVDGSRGYRLQRNIELHLESDGCTSFIRQAARKVFSNIKSGKIVEQALVDLVQEDGDKAITGFLRSVGVSEEDIALLCRIRWINLCAHGDLRLVLRTKLMSSRRIIETEEIPSLIKSIQSKLSKNFVKGAKKILAESINKSAFQSSIASGFIGFCQSVGSKCVRTGEGGFYYIKELKSKVDLYCPCEVCARWKGVTYCSSSCLKIESFTRPLMWDYFSLVLSNACELGEWVFEDVEYPKDINFLRNPNLFWLVKPRVSCQIEEKLGLTHILQSIRRNYPQLFETHLSPFMSDFQAGRTLGTMTVKFLDVCVALDLANENLGIVKHFLKNRRHDIYIVKQDESSQSHIRCQKSICVDVELTSTQVCQNFMTQLIMSSLVQPLVLTSSELKKFNWFQQVLTLETDEDVDLGLLTDFALQVKKFNVDRAMHSEDLSAGYISSTVSVTTFSLSKPIFLQQIDSDFIGGTEDRKDFIQMIKSEFTKNSIDLQFVIQISHVKRALRFNLKRTTVYTLIVRTSILKEVILNSLGQEDQSVELVVDDLELFCSGHDGNHFTLDAAPLIVQEPLINGNLKFDLVSRLEEEDLTFSYSESLPSFHFNFEKYKHELCNKFSYHLSGPVIVDEPLVLDRGVILHGGRKLTTLQFDFSADRIMQALSELESLSSRDLFLFNLWVYSDQTKSKLYIHQDKLLLLVESYLSELNSSLARYDSWLNLGNYMICYSKSFKCLMISDTNGRNRLKGILCRRLIEEEVQDIE.

Positions 26–284 (ITLVTCQNDA…THHSEHPVDC (259 aa)) are endonuclease. Mn(2+) is bound by residues Glu-51, Asp-89, and Glu-102. Lys-115 is an active-site residue. The 200-residue stretch at 1188-1387 (TDMKMCVNLG…FISTKFNKFV (200 aa)) folds into the RdRp catalytic domain. Asp-1346 is a binding site for Mg(2+).

It belongs to the Bunyavirales RNA polymerase family. Homomultimer; the oligomeric structure is essential for the polymerase activity. Interacts with nucleoprotein N. Interacts with protein Z; this interaction inhibits viral transcription and replication, Z partially blocks the product exit tunnel for the releasing nascent RNA product. It depends on Mn(2+) as a cofactor. Mg(2+) is required as a cofactor.

It localises to the virion. It is found in the host cytoplasm. The enzyme catalyses RNA(n) + a ribonucleoside 5'-triphosphate = RNA(n+1) + diphosphate. Its function is as follows. RNA-dependent RNA polymerase, which is responsible for the replication and transcription of the viral RNA genome using antigenomic RNA as an intermediate. During transcription, synthesizes subgenomic RNAs and assures their capping by a cap-snatching mechanism, which involves the endonuclease activity cleaving the host capped pre-mRNAs. These short capped RNAs are then used as primers for viral transcription. The 3'-end of subgenomic mRNAs molecules are heterogeneous and not polyadenylated. The replicase function is to direct synthesis of antigenomic and genomic RNA which are encapsidated and non capped. As a consequence of the use of the same enzyme for both transcription and replication, these mechanisms need to be well coordinated. These processes may be regulated by proteins N and Z in a dose-dependent manner. Z protein inhibits the viral polymerase L und thus the viral transcription and RNA synthesis. The sequence is that of RNA-directed RNA polymerase L from Calomys callosus (Large vesper mouse).